Reading from the N-terminus, the 1494-residue chain is Neuropathy target esterase sws (1494 aa).

At 1–35 (MDVLELLRVSGSNMYYSTFLADAWCYYISNQITMT) the chain is on the lumenal side. The chain crosses the membrane as a helical span at residues 36 to 56 (MYLYCALGVLSMLFIGWFVYF). Over 57–1494 (KRLARLRLRH…NTNNETKNYL (1438 aa)) the chain is Cytoplasmic. A nucleoside 3',5'-cyclic phosphate is bound at residue 176-303 (IFGHFEKPIF…IRVIQVIMIR (128 aa)). Residues 362–372 (ASGTAGSTHTA) are compositionally biased toward low complexity. 2 disordered regions span residues 362–405 (ASGT…ELSG) and 422–452 (NSYP…QPEV). The span at 435-449 (GNLSTRRGSITQQEQ) shows a compositional bias: polar residues. Serine 443 is modified (phosphoserine). Residues 474–601 (ELGL…VVRR) and 590–717 (IVLD…LSHR) each bind a nucleoside 3',5'-cyclic phosphate. The PNPLA domain occupies 944-1110 (LVLGGGGARG…VNNLPGHLWR (167 aa)). A GXGXXG motif is present at residues 948 to 953 (GGGARG). The short motif at 975–979 (GVSIG) is the GXSXG element. Serine 977 serves as the catalytic Nucleophile. Aspartate 1097 functions as the Proton acceptor in the catalytic mechanism. The DGA/G motif lies at 1097–1099 (DGG). A disordered region spans residues 1367-1494 (MDKATQSTPP…NTNNETKNYL (128 aa)). Residues 1370-1381 (ATQSTPPLQSKA) show a composition bias toward polar residues. 2 stretches are compositionally biased toward basic and acidic residues: residues 1389–1420 (SKEE…RELS) and 1452–1483 (MDKK…KENR). Residues 1484–1494 (SNTNNETKNYL) show a composition bias toward polar residues.

Belongs to the NTE family. As to quaternary structure, interacts with Pka-C3; interaction inhibits the catalytic function of Pka-C3 and the esterase activity of sws.

The protein localises to the endoplasmic reticulum membrane. The enzyme catalyses a 1-acyl-sn-glycero-3-phosphocholine + H2O = sn-glycerol 3-phosphocholine + a fatty acid + H(+). Its function is as follows. Phospholipase B that deacylates intracellular phosphatidylcholine (PtdCho), generating glycerophosphocholine (GroPtdCho). This deacylation occurs at both sn-2 and sn-1 positions of PtdCho. Its specific chemical modification by certain organophosphorus (OP) compounds leads to distal axonopathy. Plays a role in the signaling mechanism between neurons and glia that regulates glia wrapping during development of the adult brain. Essential for membrane lipid homeostasis and cell survival in both neurons and glia of the adult brain. This chain is Neuropathy target esterase sws, found in Drosophila pseudoobscura pseudoobscura (Fruit fly).